A 445-amino-acid chain; its full sequence is Chromosome partition protein MukF (445 aa).

The segment at Leu-213–Ile-241 is leucine-zipper.

Belongs to the MukF family. In terms of assembly, interacts, and probably forms a ternary complex, with MukE and MukB via its C-terminal region. The complex formation is stimulated by calcium or magnesium. It is required for an interaction between MukE and MukB.

It is found in the cytoplasm. The protein localises to the nucleoid. In terms of biological role, involved in chromosome condensation, segregation and cell cycle progression. May participate in facilitating chromosome segregation by condensation DNA from both sides of a centrally located replisome during cell division. Not required for mini-F plasmid partitioning. Probably acts via its interaction with MukB and MukE. Overexpression results in anucleate cells. It has a calcium binding activity. The sequence is that of Chromosome partition protein MukF from Vibrio cholerae serotype O1 (strain ATCC 39541 / Classical Ogawa 395 / O395).